The chain runs to 164 residues: Succinate dehydrogenase assembly factor 2, mitochondrial (164 aa).

It belongs to the SDHAF2 family. Interacts with the flavoprotein subunit within the SDH catalytic dimer.

It localises to the mitochondrion matrix. Its function is as follows. Plays an essential role in the assembly of succinate dehydrogenase (SDH), an enzyme complex (also referred to as respiratory complex II) that is a component of both the tricarboxylic acid (TCA) cycle and the mitochondrial electron transport chain, and which couples the oxidation of succinate to fumarate with the reduction of ubiquinone (coenzyme Q) to ubiquinol. Required for flavinylation (covalent attachment of FAD) of the flavoprotein subunit of the SDH catalytic dimer. The chain is Succinate dehydrogenase assembly factor 2, mitochondrial from Lodderomyces elongisporus (strain ATCC 11503 / CBS 2605 / JCM 1781 / NBRC 1676 / NRRL YB-4239) (Yeast).